The following is a 237-amino-acid chain: Sugar fermentation stimulation protein homolog (237 aa).

This sequence belongs to the SfsA family.

The polypeptide is Sugar fermentation stimulation protein homolog (Pseudomonas fluorescens (strain ATCC BAA-477 / NRRL B-23932 / Pf-5)).